Consider the following 579-residue polypeptide: Copine-E (579 aa).

C2 domains are found at residues 45-175 and 183-304; these read IDPS…KVIG and QTGT…EFTL. The Ca(2+) site is built by Asp80, Asp86, Asp145, Asp147, and Asp153. The 208-residue stretch at 345–552 folds into the VWFA domain; that stretch reads NLMIAIDCTA…KKYENDPEQL (208 aa).

Belongs to the copine family. Requires Ca(2+) as cofactor.

The polypeptide is Copine-E (cpnE) (Dictyostelium discoideum (Social amoeba)).